A 461-amino-acid polypeptide reads, in one-letter code: Isthmin-1 (461 aa).

Residues 1-26 (MVRLAAELLLLLGLLLLTLHITVLRS) form the signal peptide. An N-linked (GlcNAc...) asparagine glycan is attached at Asn-33. The span at 40-58 (QDSRVAENNVNADSSSSVQ) shows a compositional bias: polar residues. Disordered stretches follow at residues 40-62 (QDSR…LGPG), 73-92 (ASQP…RDGP), and 128-188 (EGSE…NFLK). The segment covering 131–141 (EPEKGMRKENK) has biased composition (basic and acidic residues). The span at 156–165 (SSSSSSSSVS) shows a compositional bias: low complexity. The TSP type-1 domain occupies 215-259 (DGEGDWSAWSPCSVSCGNGNQKRTRSCGYACTATESRTCDMPSCP). Intrachain disulfides connect Cys-226–Cys-253, Cys-230–Cys-258, and Cys-241–Cys-245. A glycan (N-linked (GlcNAc...) asparagine) is linked at Asn-282. The AMOP domain occupies 286-449 (LFGVDTDSCE…QKCAENPQDE (164 aa)).

It belongs to the isthmin family.

It is found in the secreted. Its function is as follows. May specifically influence certain angiogenesis process. This is Isthmin-1 (ism1) from Danio rerio (Zebrafish).